Consider the following 313-residue polypeptide: WD repeat-containing protein 82-A (313 aa).

WD repeat units follow at residues 19–58, 105–144, 146–184, 192–231, 236–276, and 280–313; these read ENSD…PKRT, GHSK…CQGL, HLQG…KGPF, DRTC…VMHT, NNSK…KVAV, and KHTG…TIDD.

It belongs to the WD repeat SWD2 family. Component of the SET1/COMPASS complex. Component of the PNUTS-PP1 phosphatase complex.

The protein resides in the nucleus. Its subcellular location is the chromosome. It localises to the cytoplasm. Its function is as follows. Regulatory component of the SET1/COMPASS complex implicated in the tethering of this complex to transcriptional start sites of active genes. Facilitates histone H3 'Lys-4' methylation (H3K4me) via recruitment of the SETD1A or SETD1B to the 'Ser-5' phosphorylated C-terminal domain (CTD) of RNA polymerase II large subunit (POLR2A). Component of the PNUTS-PP1 protein phosphatase complex, a protein phosphatase 1 (PP1) complex that promotes RNA polymerase II transcription pause-release, allowing transcription elongation. This Xenopus laevis (African clawed frog) protein is WD repeat-containing protein 82-A (wdr82-a).